A 336-amino-acid polypeptide reads, in one-letter code: Cytosolic 5'-nucleotidase 3A (336 aa).

Aspartate 88 acts as the Nucleophile in catalysis. Mg(2+)-binding residues include aspartate 88 and aspartate 90. Aspartate 90 serves as the catalytic Proton donor. Glutamate 135 contacts CMP. Residues glutamate 135 and serine 156 each coordinate N(7)-methyl-GMP. Residues 203-204 and lysine 252 contribute to the substrate site; that span reads SA. Aspartate 277 is a Mg(2+) binding site. Phosphoserine is present on serine 278.

This sequence belongs to the pyrimidine 5'-nucleotidase family. Monomer. In terms of tissue distribution, isoforms 1, 3 and 4 are expressed in reticulocytes. Isoform 4 is hardly detectable in bone marrow and fetal liver.

It localises to the cytoplasm. The protein localises to the endoplasmic reticulum. The enzyme catalyses N(7)-methyl-GMP + H2O = N(7)-methylguanosine + phosphate. The catalysed reaction is CMP + H2O = cytidine + phosphate. It catalyses the reaction a ribonucleoside 5'-phosphate + H2O = a ribonucleoside + phosphate. Functionally, nucleotidase which shows specific activity towards cytidine monophosphate (CMP) and 7-methylguanosine monophosphate (m(7)GMP). CMP seems to be the preferred substrate. The sequence is that of Cytosolic 5'-nucleotidase 3A (NT5C3A) from Homo sapiens (Human).